The following is a 60-amino-acid chain: uncharacterized protein (60 aa).

The chain crosses the membrane as a helical span at residues Val11 to Ala33. N-linked (GlcNAc...) asparagine; by host glycans are attached at residues Asn40 and Asn57.

Its subcellular location is the host membrane. This is an uncharacterized protein from African swine fever virus (strain Badajoz 1971 Vero-adapted) (Ba71V).